The primary structure comprises 466 residues: Vimentin (466 aa).

Low complexity-rich tracts occupy residues 1 to 13 and 20 to 33; these read MSTRSVSSSSYRR and TSSRPSSNRSYVTT. The interval 1–33 is disordered; it reads MSTRSVSSSSYRRMFGGSGTSSRPSSNRSYVTT. The residue at position 2 (Ser-2) is an N-acetylserine. A head region spans residues 2 to 95; that stretch reads STRSVSSSSY…FSLADAINTE (94 aa). Ser-5 carries the phosphoserine modification. The residue at position 7 (Ser-7) is a Phosphoserine; by PKA and PKC; alternate. Residue Ser-7 is glycosylated (O-linked (GlcNAc) serine; alternate). At Ser-8 the chain carries Phosphoserine. Ser-9 and Ser-10 each carry phosphoserine; by PKC. Position 20 is a phosphothreonine (Thr-20). Position 21 is a phosphoserine; by PKC (Ser-21). The residue at position 25 (Ser-25) is a Phosphoserine; by PKA and PKC. Phosphoserine; by PKC is present on Ser-26. Residue Thr-33 is glycosylated (O-linked (GlcNAc) threonine). Residue Ser-34 is glycosylated (O-linked (GlcNAc) serine; alternate). Ser-34 is modified (phosphoserine; by PKC; alternate). Ser-39 carries the phosphoserine; by CaMK2, PKA, PKC and ROCK2 modification. At Ser-42 the chain carries Phosphoserine; by PKC. Position 47 is a phosphoserine; by PKA (Ser-47). Ser-49 is subject to Phosphoserine. Ser-51 bears the Phosphoserine; by PKA and PKC mark. Tyr-53 is subject to Phosphotyrosine. Phosphoserine is present on residues Ser-55 and Ser-56. Tyr-61 is modified (phosphotyrosine). Ser-66 carries the phosphoserine; by PKA and PKC modification. Ser-72 is modified (phosphoserine; by AURKB and ROCK2). Ser-73 carries the post-translational modification Phosphoserine. Position 83 is a phosphoserine; by CaMK2 (Ser-83). A Phosphoserine modification is found at Ser-87. Positions 96-131 are coil 1A; sequence FKNTRTNEKVELQELNDRFANYIDKVRFLEQQNKIL. Positions 96–131 form a coiled coil; sequence FKNTRTNEKVELQELNDRFANYIDKVRFLEQQNKIL. Residues 103–411 form the IF rod domain; it reads EKVELQELND…KLLEGEESRI (309 aa). Residue Lys-104 forms a Glycyl lysine isopeptide (Lys-Gly) (interchain with G-Cter in SUMO2) linkage. Phosphotyrosine is present on Tyr-117. N6-acetyllysine; alternate is present on residues Lys-120, Lys-129, and Lys-139. 2 positions are modified to N6-succinyllysine; alternate: Lys-120 and Lys-129. Residues Lys-120, Lys-129, and Lys-139 each participate in a glycyl lysine isopeptide (Lys-Gly) (interchain with G-Cter in SUMO2); alternate cross-link. The interval 132–153 is linker 1; it reads LAELEQLKGQGKSRLGDLYEEE. Position 144 is a phosphoserine (Ser-144). Residues 154–245 adopt a coiled-coil conformation; it reads MRELRRQVDQ…KLHDEEIQEL (92 aa). The interval 154-245 is coil 1B; sequence MRELRRQVDQ…KLHDEEIQEL (92 aa). Lys-168 bears the N6-acetyllysine mark. The residue at position 188 (Lys-188) is an N6-acetyllysine; alternate. The residue at position 188 (Lys-188) is an N6-succinyllysine; alternate. The residue at position 214 (Ser-214) is a Phosphoserine. Lys-223 is subject to N6-acetyllysine; alternate. Lys-223 is covalently cross-linked (Glycyl lysine isopeptide (Lys-Gly) (interchain with G-Cter in SUMO2); alternate). The residue at position 226 (Ser-226) is a Phosphoserine. Lys-235 carries the post-translational modification N6-acetyllysine. Residues 246 to 268 are linker 12; it reads QAQIQEQHVQIDVDVSKPDLTAA. Lys-262 is covalently cross-linked (Glycyl lysine isopeptide (Lys-Gly) (interchain with G-Cter in SUMO2)). Positions 269-407 are coil 2; that stretch reads LRDVRQQYES…ATYRKLLEGE (139 aa). The residue at position 294 (Lys-294) is an N6-acetyllysine; alternate. Lys-294 bears the N6-succinyllysine; alternate mark. Lys-294 is covalently cross-linked (Glycyl lysine isopeptide (Lys-Gly) (interchain with G-Cter in SUMO2); alternate). Ser-299 is subject to Phosphoserine. The stretch at 303–407 forms a coiled coil; that stretch reads NRNNDALRQA…ATYRKLLEGE (105 aa). Lys-313 participates in a covalent cross-link: Glycyl lysine isopeptide (Lys-Gly) (interchain with G-Cter in SUMO2). Ser-325 is modified (phosphoserine). The [IL]-x-C-x-x-[DE] motif motif lies at 326–329; sequence LTCE. Residue Lys-373 is modified to N6-acetyllysine; alternate. Residue Lys-373 forms a Glycyl lysine isopeptide (Lys-Gly) (interchain with G-Cter in SUMO2); alternate linkage. The segment at 408–466 is tail; it reads ESRISLPLPTFSSLNLRETNLESLPLVDTHSKRTLLIKTVETRDGQVINETSQHHDDLE. 4 positions are modified to phosphoserine: Ser-409, Ser-412, Ser-419, and Ser-420. Residue Thr-426 is modified to Phosphothreonine. Ser-430 is modified (phosphoserine). Thr-436 carries the post-translational modification Phosphothreonine. The residue at position 438 (Ser-438) is a Phosphoserine. A Glycyl lysine isopeptide (Lys-Gly) (interchain with G-Cter in SUMO2) cross-link involves residue Lys-439. An N6-acetyllysine; alternate modification is found at Lys-445. Lys-445 bears the N6-succinyllysine; alternate mark. A Glycyl lysine isopeptide (Lys-Gly) (interchain with G-Cter in SUMO2); alternate cross-link involves residue Lys-445. A Glycyl lysine isopeptide (Lys-Gly) (interchain with G-Cter in SUMO1); alternate cross-link involves residue Lys-445. 2 positions are modified to phosphothreonine: Thr-446 and Thr-458. Phosphoserine is present on Ser-459.

It belongs to the intermediate filament family. Homomer assembled from elementary dimers. Identified in complexes that contain VIM, EZR, AHNAK, BFSP1, BFSP2, ANK2, PLEC, PRX and spectrin. Interacts with BCAS3. Interacts with LGSN. Interacts with SYNM. Interacts (via rod region) with PLEC (via CH 1 domain). Interacts with PLEC isoform 1C. Interacts with STK33. Interacts with LARP6. Interacts with RAB8B. Interacts with TOR1A; the interaction associates TOR1A with the cytoskeleton. Interacts with TOR1AIP1. Interacts with DIAPH1. Interacts with EPPK1; interaction is dependent of higher-order structure of intermediate filament. Interacts with the non-receptor tyrosine kinase SRMS; the interaction leads to phosphorylation of VIM. Interacts with NOD2. Interacts (via head region) with CORO1C. Interacts with HDGF. Interacts with PRKCE (via phorbol-ester/DAG-type 2 domain). Interacts with BFSP2. Interacts with PPL. Interacts with PKP1 and PKP2. Interacts with SCRIB (via PDZ domains); the interaction protects SCRIB from proteasomal degradation and facilitates SCRIB localization to intermediate filaments, the interaction is reduced by cell contact inhibition. Post-translationally, phosphorylation by PKN1 inhibits the formation of filaments. Filament disassembly during mitosis is promoted by phosphorylation at Ser-55 as well as by nestin. One of the most prominent phosphoproteins in various cells of mesenchymal origin. Phosphorylation is enhanced during cell division, at which time vimentin filaments are significantly reorganized. Phosphorylated at Ser-56 by CDK5 during neutrophil secretion in the cytoplasm. Phosphorylated by STK33. Phosphorylated on tyrosine residues by SRMS. In terms of processing, S-nitrosylation is induced by interferon-gamma and oxidatively-modified low-densitity lipoprotein (LDL(ox)) possibly implicating the iNOS-S100A8/9 transnitrosylase complex. In terms of tissue distribution, detected in eye lens fiber cells (at protein level). Expressed in retinal lens epithelial cells (at protein level). Expressed in Langerhans cells in the epidermis (at protein level).

The protein resides in the cytoplasm. It localises to the cytoskeleton. Its subcellular location is the nucleus matrix. It is found in the cell membrane. Vimentins are class-III intermediate filaments found in various non-epithelial cells, especially mesenchymal cells. Vimentin is attached to the nucleus, endoplasmic reticulum, and mitochondria, either laterally or terminally. Plays a role in cell directional movement, orientation, cell sheet organization and Golgi complex polarization at the cell migration front. Protects SCRIB from proteasomal degradation and facilitates its localization to intermediate filaments in a cell contact-mediated manner. Its function is as follows. Involved with LARP6 in the stabilization of type I collagen mRNAs for CO1A1 and CO1A2. This is Vimentin from Mus musculus (Mouse).